The following is a 1356-amino-acid chain: MPYIGASNLSEHSFVNLKEKHAITHKGTSSSVASLQTPPSPDQENHIDNELENYDTSLSDVSTPNKKEGDEFEQSLRDTFASFRKTKPPPPLDFEQPRLPSTASSSVDSTVSSPLTDEDIKELEFLPNESTHSYSYNPLSPNSLAVRLRILKRSLEIIIQNPSMLLEPTPDDLPPLKEFAGRRSSLPRTSASANHLMNRNKSQIWNTTSATLNAFVNNTSSSSAASSALSNKKPGTPVFPNLDPTHSQTFHRANSLAYLPSILPEQDPLLKHNNSLFRGDYGNNISPERPSFRQPFKDQTSNLRNSSLLNERAYQEDETFLPHHGPSMDLLNEQRANLKSLLNLLNETLEKNTSERASDLHMISLFNLNKLMLGDPKKNNSERDKRTEKLKKILLDSLAEPFFEHYNFIGDNPIADTDELKEEIDEFTGSGDTTAITDIRPQQDYGRILRTFTSTKNSAPQAIFTCSQEDPWQFRAANDLACLVFGISQNAIRALTLMDLIHTDSRNFVLHKLLSTEGQEMVFTGEIIGIVQPETLSSSKVVWASFWAKRKNGLLVCVFEKVPCDYVDVLLNLDDFGAENIVDKCELLSDGPTLSSSSTLSLPKMASSPTGSKLEYSLERKILEKSYTKPTSTENRNGDENQLDGDSHSEPSLSSSPVRSKKSVKFANDIKDVKSISQSLAKLMDDVRNGVVFDPDDDLLPMPIKVCNHINETRYFTLNHLSYNIPCAVSSTVLEDELKLKIHSLPYQAGLFIVDSHTLDIVSSNKSILKNMFGYHFAELVGKSITEIIPSFPKFLQFINDKYPALDITLHKNKGLVLTEHFFRKIQAEIMGDRKSFYTSVGIDGLHRDGCEIKIDFQLRVMNSKVILLWVTHSRDVVFEEYNTNPSQLKMLKESELSLMSSASSSASSSKKSSSRISTGTLKDMSNLSTYEDLAHRTNKLKYEIGDDSRAHSQSTLSEQEQVPLENDKDSGEMMLADPEMKHKLELARIYSRDKSQFVKEGNFKVDENLIISKISLSPSTESLADSKSSGKGLSPLEEEKLIDENATENGLAGSPKDEDGIIMTNKRGNQPVSTFLRTPEKNIGAQKHVKKFSDFVSLQKMGEGAYGKVNLCIHKKNRYIVVIKMIFKERILVDTWVRDRKLGTIPSEIQIMATLNKKPHENILRLLDFFEDDDYYYIETPVHGETGCIDLFDLIEFKTNMTEFEAKLIFKQVVAGIKHLHDQGIVHRDIKDENVIVDSKGFVKIIDFGSAAYVKSGPFDVFVGTIDYAAPEVLGGNPYEGQPQDIWAIGILLYTVVFKENPFYNIDEILEGDLKFNNAEEVSEDCIELIKSILNRCVPKRPTIDDINNDKWLVI.

Ser10 is modified (phosphoserine). The tract at residues 20–115 is disordered; the sequence is KHAITHKGTS…SVDSTVSSPL (96 aa). 2 stretches are compositionally biased toward polar residues: residues 26–37 and 54–64; these read KGTSSSVASLQT and YDTSLSDVSTP. The span at 99 to 115 shows a compositional bias: low complexity; that stretch reads LPSTASSSVDSTVSSPL. 5 positions are modified to phosphoserine: Ser192, Ser202, Ser255, Ser286, and Ser327. The PAS 1 domain occupies 450-518; sequence RTFTSTKNSA…VLHKLLSTEG (69 aa). The segment covering 592-608 has biased composition (low complexity); it reads PTLSSSSTLSLPKMASS. Disordered stretches follow at residues 592–612 and 627–660; these read PTLSSSSTLSLPKMASSPTGS and YTKPTSTENRNGDENQLDGDSHSEPSLSSSPVRS. Positions 738–807 constitute a PAS 2 domain; that stretch reads LKLKIHSLPY…FINDKYPALD (70 aa). The residue at position 926 (Ser926) is a Phosphoserine. Residues 948 to 972 form a disordered region; that stretch reads DSRAHSQSTLSEQEQVPLENDKDSG. Positions 952 to 961 are enriched in polar residues; it reads HSQSTLSEQE. Ser1018, Ser1023, Ser1035, and Ser1055 each carry phosphoserine. A compositionally biased stretch (polar residues) spans 1021-1032; that stretch reads TESLADSKSSGK. The tract at residues 1021–1066 is disordered; the sequence is TESLADSKSSGKGLSPLEEEKLIDENATENGLAGSPKDEDGIIMTN. Thr1079 carries the post-translational modification Phosphothreonine. Residues 1096–1354 enclose the Protein kinase domain; the sequence is FVSLQKMGEG…IDDINNDKWL (259 aa). ATP contacts are provided by residues 1102-1110 and Lys1125; that span reads MGEGAYGKV. Asp1230 (proton acceptor) is an active-site residue.

This sequence belongs to the protein kinase superfamily. Ser/Thr protein kinase family.

The protein resides in the cytoplasm. The enzyme catalyses L-seryl-[protein] + ATP = O-phospho-L-seryl-[protein] + ADP + H(+). The catalysed reaction is L-threonyl-[protein] + ATP = O-phospho-L-threonyl-[protein] + ADP + H(+). Its function is as follows. Serine/threonine-protein kinase involved in the control of sugar metabolism and translation. Phosphorylates UGP1, which is required for normal glycogen and beta-(1,6)-glucan synthesis. This phosphorylation shifts glucose partitioning toward cell wall glucan synthesis at the expense of glycogen synthesis. This Saccharomyces cerevisiae (strain ATCC 204508 / S288c) (Baker's yeast) protein is Serine/threonine-protein kinase PSK1 (PSK1).